The sequence spans 913 residues: Calcium-activated chloride channel regulator 1 (913 aa).

Positions 1–21 (MGSFKSSVFILVLHLLEGALS) are cleaved as a signal peptide. The interval 46–199 (DETLIQQIKD…DIAGKNVVNH (154 aa)) is metalloprotease domain. His156 is a binding site for Zn(2+). The active site involves Glu157. Zn(2+) is bound by residues His160 and Asn167. The VWFA domain occupies 306–475 (IVCLVLDKSG…NGLIDAFGAL (170 aa)). Asn503, Asn514, Asn770, Asn804, Asn810, Asn836, and Asn885 each carry an N-linked (GlcNAc...) asparagine glycan.

Belongs to the CLCR family. Glycosylated. In terms of processing, the translation product is autoproteolytically cleaved by the metalloprotease domain in the endoplasmic reticulum into a N-terminal and a C-terminal products that remain physically associated with each other. The cleavage is necessary for calcium-activated chloride channel (CaCC) activation activity. As to expression, expressed in mucin-producing cells in the respiratory and intestinal tracts, cutaneous sweat glands, and renal mucous glands (at protein level). Strong overexpression in the airways of horses with recurrent airway obstruction (at protein level).

It localises to the secreted. The protein resides in the extracellular space. Functionally, may be involved in mediating calcium-activated chloride conductance. May play critical roles in goblet cell metaplasia, mucus hypersecretion, cystic fibrosis and AHR. May be involved in the regulation of mucus production and/or secretion by goblet cells. Involved in the regulation of tissue inflammation in the innate immune response. May play a role as a tumor suppressor. Induces MUC5AC. The polypeptide is Calcium-activated chloride channel regulator 1 (CLCA1) (Equus caballus (Horse)).